Reading from the N-terminus, the 199-residue chain is VAMP-like protein YKT62 (199 aa).

The Longin domain occupies 7 to 131 (LVLKCDPETR…PYLKEASDKF (125 aa)). The v-SNARE coiled-coil homology domain occupies 139–199 (KLLKIQRELD…KKTNSCCTLL (61 aa)). Cysteine 195 is lipidated: S-palmitoyl cysteine. Cysteine 196 carries the post-translational modification Cysteine methyl ester. The S-geranylgeranyl cysteine moiety is linked to residue cysteine 196. Residues 197–199 (TLL) constitute a propeptide, removed in mature form.

This sequence belongs to the synaptobrevin family. Interacts with SYP41. Core constituent of the SNARE complex required for membrane fusion at the trans-Golgi network.

The protein localises to the cell membrane. Functionally, involved in the secretory pathway. Essential for membrane fusion mediated by either SYP41 or SYP61; triggers the fusion of phospholipid vesicles containing SYP41 or SYP61 and VTI12. This chain is VAMP-like protein YKT62, found in Arabidopsis thaliana (Mouse-ear cress).